The following is an 84-amino-acid chain: Sec-independent protein translocase protein TatA (84 aa).

Residues 4–24 traverse the membrane as a helical segment; that stretch reads MSPVHWLILAVVLLVVFGGGG. The interval 46 to 84 is disordered; the sequence is DDESMTATDATQAPGHISPPNQNPGYSQTTSSETHRNQV. Residues 64-77 show a composition bias toward polar residues; sequence PPNQNPGYSQTTSS.

The protein belongs to the TatA/E family. The Tat system comprises two distinct complexes: a TatABC complex, containing multiple copies of TatA, TatB and TatC subunits, and a separate TatA complex, containing only TatA subunits. Substrates initially bind to the TatABC complex, which probably triggers association of the separate TatA complex to form the active translocon.

The protein resides in the cell inner membrane. In terms of biological role, part of the twin-arginine translocation (Tat) system that transports large folded proteins containing a characteristic twin-arginine motif in their signal peptide across membranes. TatA could form the protein-conducting channel of the Tat system. This Gluconobacter oxydans (strain 621H) (Gluconobacter suboxydans) protein is Sec-independent protein translocase protein TatA.